The primary structure comprises 548 residues: Lysine--tRNA ligase (548 aa).

The short motif at Pro-43–Asn-51 is the 'HIGH' region element. Positions Pro-308 to Ser-312 match the 'KMSKS' region motif.

It belongs to the class-I aminoacyl-tRNA synthetase family.

Its subcellular location is the cytoplasm. It catalyses the reaction tRNA(Lys) + L-lysine + ATP = L-lysyl-tRNA(Lys) + AMP + diphosphate. This chain is Lysine--tRNA ligase, found in Halobacterium salinarum (strain ATCC 700922 / JCM 11081 / NRC-1) (Halobacterium halobium).